The sequence spans 705 residues: Elongation factor G (705 aa).

Residues 8–291 (EKVRNIGIMA…AVVEYLPSPI (284 aa)) form the tr-type G domain. GTP contacts are provided by residues 17-24 (AHIDAGKT), 90-94 (DTPGH), and 144-147 (NKMD).

This sequence belongs to the TRAFAC class translation factor GTPase superfamily. Classic translation factor GTPase family. EF-G/EF-2 subfamily.

It localises to the cytoplasm. Its function is as follows. Catalyzes the GTP-dependent ribosomal translocation step during translation elongation. During this step, the ribosome changes from the pre-translocational (PRE) to the post-translocational (POST) state as the newly formed A-site-bound peptidyl-tRNA and P-site-bound deacylated tRNA move to the P and E sites, respectively. Catalyzes the coordinated movement of the two tRNA molecules, the mRNA and conformational changes in the ribosome. This chain is Elongation factor G, found in Chloroherpeton thalassium (strain ATCC 35110 / GB-78).